The sequence spans 116 residues: Chorion protein S15 (116 aa).

The first 18 residues, 1–18, serve as a signal peptide directing secretion; that stretch reads MKFLIAFAVLALVACINA.

The protein belongs to the chorion protein S15/S18 family.

It localises to the secreted. In terms of biological role, chorion membrane (egg shell) protein; plays a role in protecting the egg from the environment. The chain is Chorion protein S15 (Cp15) from Drosophila virilis (Fruit fly).